Here is a 406-residue protein sequence, read N- to C-terminus: Argininosuccinate synthase (406 aa).

Residue 8-16 coordinates ATP; it reads AYSGGLDTS. An L-citrulline-binding site is contributed by Tyr86. Position 116 (Gly116) interacts with ATP. Positions 118, 122, and 123 each coordinate L-aspartate. Position 122 (Asn122) interacts with L-citrulline. L-citrulline contacts are provided by Arg126, Ser174, Ser183, Glu259, and Tyr271.

This sequence belongs to the argininosuccinate synthase family. Type 1 subfamily. In terms of assembly, homotetramer.

The protein localises to the cytoplasm. It catalyses the reaction L-citrulline + L-aspartate + ATP = 2-(N(omega)-L-arginino)succinate + AMP + diphosphate + H(+). The protein operates within amino-acid biosynthesis; L-arginine biosynthesis; L-arginine from L-ornithine and carbamoyl phosphate: step 2/3. In Dehalococcoides mccartyi (strain ATCC BAA-2100 / JCM 16839 / KCTC 5957 / BAV1), this protein is Argininosuccinate synthase.